A 261-amino-acid polypeptide reads, in one-letter code: Polycomb group RING finger protein 1 (261 aa).

The RING-type zinc finger occupies 45–84; that stretch reads CYLCAGYFIDATTITECLHTFCKSCIVKYLQTSKYCPMCN.

Component of a PRC1-like complex.

The protein localises to the nucleus. Functionally, component of a Polycomb group (PcG) multiprotein PRC1-like complex, a complex class required to maintain the transcriptionally repressive state of many genes, including Hox genes, throughout development. PcG PRC1 complex acts via chromatin remodeling and modification of histones; it mediates monoubiquitination of histone H2A 'Lys-119', rendering chromatin heritably changed in its expressibility. This chain is Polycomb group RING finger protein 1 (pcgf1), found in Danio rerio (Zebrafish).